The sequence spans 502 residues: L-ornithine N(5)-monooxygenase (502 aa).

Over residues 1–10 (MEPVERKLEI) the composition is skewed to basic and acidic residues. The interval 1 to 34 (MEPVERKLEIGSRSYSKMPLTQQRSSGEPPRLKA) is disordered. Polar residues predominate over residues 13–26 (RSYSKMPLTQQRSS). FAD is bound by residues 83–91 (ERQKQFAWH) and glutamine 102. Residue lysine 107 participates in substrate binding. Valine 168 contacts FAD. NADP(+) is bound by residues 254-257 (SGQS) and arginine 279. Residues 293 to 296 (NEVF) and asparagine 323 contribute to the substrate site. 323 to 325 (NYS) contributes to the NADP(+) binding site. FAD is bound at residue 466–468 (SLL). Serine 469 contributes to the substrate binding site.

This sequence belongs to the lysine N(6)-hydroxylase/L-ornithine N(5)-oxygenase family. Homotetramer. The cofactor is FAD.

It catalyses the reaction L-ornithine + NADPH + O2 = N(5)-hydroxy-L-ornithine + NADP(+) + H2O. It carries out the reaction L-ornithine + NADH + O2 = N(5)-hydroxy-L-ornithine + NAD(+) + H2O. It functions in the pathway siderophore biosynthesis. Catalyzes the conversion of L-ornithine to N(5)-hydroxyornithine, the first step in the biosynthesis of all hydroxamate-containing siderophores, such as deferriferrichrysin. The polypeptide is L-ornithine N(5)-monooxygenase (Aspergillus oryzae (strain ATCC 42149 / RIB 40) (Yellow koji mold)).